Reading from the N-terminus, the 363-residue chain is Flagellar P-ring protein (363 aa).

The first 20 residues, 1–20 (MKIKVLLAVALLAMTVPVKA), serve as a signal peptide directing secretion.

It belongs to the FlgI family. The basal body constitutes a major portion of the flagellar organelle and consists of four rings (L,P,S, and M) mounted on a central rod.

It localises to the periplasm. Its subcellular location is the bacterial flagellum basal body. Functionally, assembles around the rod to form the L-ring and probably protects the motor/basal body from shearing forces during rotation. The polypeptide is Flagellar P-ring protein (Shewanella amazonensis (strain ATCC BAA-1098 / SB2B)).